The chain runs to 248 residues: Probable transcriptional regulatory protein PHZ_c3068 (248 aa).

The protein belongs to the TACO1 family.

Its subcellular location is the cytoplasm. The sequence is that of Probable transcriptional regulatory protein PHZ_c3068 from Phenylobacterium zucineum (strain HLK1).